The chain runs to 237 residues: Fluoroquinolones export permease protein MT2761 (237 aa).

A run of 6 helical transmembrane segments spans residues 20–40 (FLHAAVFSGLIWLAVLLPMPV), 49–69 (YVLVGDIAIIGFFFVGGTVFF), 96–116 (VLLAISLFVAVVVATIVHGLG), 119–139 (LLPLVAGIVLGTLLMLLVGFS), 147–167 (VTDWFLAAVIPLAIMLAPPVV), and 199–219 (LAPWQVGYAVVYPIVCAAGLC).

The complex is composed of 2 ATP-binding proteins and 2 transmembrane proteins.

It is found in the cell membrane. Functionally, part of the ABC transporter complex involved in fluoroquinolones export. Probably responsible for the translocation of the substrate across the membrane. The polypeptide is Fluoroquinolones export permease protein MT2761 (Mycobacterium tuberculosis (strain CDC 1551 / Oshkosh)).